We begin with the raw amino-acid sequence, 302 residues long: Nucleotide-binding protein Strop_3101 (302 aa).

An ATP-binding site is contributed by 26–33 (GVSGGGRS). Residue 77–80 (DVRS) coordinates GTP.

Belongs to the RapZ-like family.

Displays ATPase and GTPase activities. In Salinispora tropica (strain ATCC BAA-916 / DSM 44818 / JCM 13857 / NBRC 105044 / CNB-440), this protein is Nucleotide-binding protein Strop_3101.